Reading from the N-terminus, the 311-residue chain is Ribonuclease HIII (311 aa).

The RNase H type-2 domain maps to 93 to 310 (LSAIGSDEVG…TKKALDIAKH (218 aa)). Residues Asp-99, Glu-100, and Asp-204 each contribute to the a divalent metal cation site.

The protein belongs to the RNase HII family. RnhC subfamily. Requires Mn(2+) as cofactor. It depends on Mg(2+) as a cofactor.

The protein localises to the cytoplasm. It carries out the reaction Endonucleolytic cleavage to 5'-phosphomonoester.. Endonuclease that specifically degrades the RNA of RNA-DNA hybrids. This Geobacillus kaustophilus (strain HTA426) protein is Ribonuclease HIII.